The primary structure comprises 216 residues: Small ribosomal subunit protein uS3c (216 aa).

Residues 39–109 (IRSYINRELE…SIRINVIELT (71 aa)) form the KH type-2 domain.

The protein belongs to the universal ribosomal protein uS3 family. As to quaternary structure, part of the 30S ribosomal subunit.

Its subcellular location is the plastid. The protein localises to the chloroplast. This is Small ribosomal subunit protein uS3c (rps3) from Guillardia theta (Cryptophyte).